The following is an 88-amino-acid chain: Small ribosomal subunit protein bS20 (88 aa).

Belongs to the bacterial ribosomal protein bS20 family.

Functionally, binds directly to 16S ribosomal RNA. The chain is Small ribosomal subunit protein bS20 from Bartonella tribocorum (strain CIP 105476 / IBS 506).